The sequence spans 275 residues: Large ribosomal subunit protein uL2 (275 aa).

Over residues 28-38 (RPYEPLVETKS) the composition is skewed to basic and acidic residues. Disordered regions lie at residues 28-53 (RPYEPLVETKSKSGGRNNVGRITTRH) and 222-275 (GVAM…RSAK). The segment covering 254–275 (KGHKTRKNKRTDKMIVRRRSAK) has biased composition (basic residues).

It belongs to the universal ribosomal protein uL2 family. As to quaternary structure, part of the 50S ribosomal subunit. Forms a bridge to the 30S subunit in the 70S ribosome.

Its function is as follows. One of the primary rRNA binding proteins. Required for association of the 30S and 50S subunits to form the 70S ribosome, for tRNA binding and peptide bond formation. It has been suggested to have peptidyltransferase activity; this is somewhat controversial. Makes several contacts with the 16S rRNA in the 70S ribosome. The sequence is that of Large ribosomal subunit protein uL2 from Marinobacter nauticus (strain ATCC 700491 / DSM 11845 / VT8) (Marinobacter aquaeolei).